The following is a 328-amino-acid chain: Chlorate reductase subunit beta (328 aa).

4Fe-4S ferredoxin-type domains are found at residues 6 to 35 (VAYVFDLNKCIGCHTCTMACKQLWTNRDGR), 125 to 156 (NHSFYLPRICNHCSNPACLAACPTKAIYKRPE), and 158 to 187 (GIVVVDQTRCRGYRYCVKACPYGKMYFNLQ). The [4Fe-4S] cluster site is built by Cys-15, Cys-18, Cys-21, Cys-25, Cys-134, Cys-137, and Cys-142. The [3Fe-4S] cluster site is built by Cys-146, Cys-167, and Cys-173. [4Fe-4S] cluster contacts are provided by Cys-177, Cys-194, Cys-197, Cys-209, and Cys-213.

Heterotrimer of alpha, beta and gamma subunits. Requires [3Fe-4S] cluster as cofactor. [4Fe-4S] cluster serves as cofactor.

The protein resides in the periplasm. Electron transfer subunit of the terminal reductase during anaerobic growth on chlorate. In Ideonella dechloratans, this protein is Chlorate reductase subunit beta (clrB).